We begin with the raw amino-acid sequence, 171 residues long: Small ribosomal subunit protein uS13 (171 aa).

The tract at residues 128 to 171 (HERGQKVRGQRTKSTGRTEGTIGVNVEAIKEEQAEDDAADGGEE) is disordered. Positions 160 to 171 (QAEDDAADGGEE) are enriched in acidic residues.

Belongs to the universal ribosomal protein uS13 family. In terms of assembly, part of the 30S ribosomal subunit. Forms a loose heterodimer with protein S19. Forms two bridges to the 50S subunit in the 70S ribosome.

In terms of biological role, located at the top of the head of the 30S subunit, it contacts several helices of the 16S rRNA. In the 70S ribosome it contacts the 23S rRNA (bridge B1a) and protein L5 of the 50S subunit (bridge B1b), connecting the 2 subunits; these bridges are implicated in subunit movement. The protein is Small ribosomal subunit protein uS13 of Halobacterium salinarum (strain ATCC 700922 / JCM 11081 / NRC-1) (Halobacterium halobium).